A 736-amino-acid polypeptide reads, in one-letter code: Serine/threonine-protein kinase BRSK2 (736 aa).

Positions 19-270 (YRLEKTLGKG…LEHIQKHIWY (252 aa)) constitute a Protein kinase domain. Residues 25–33 (LGKGQTGLV) and Lys48 each bind ATP. Residue Asp141 is the Proton acceptor of the active site. Thr174 carries the post-translational modification Phosphothreonine; by LKB1. Residue Thr260 is modified to Phosphothreonine; by PKA. Ser294 carries the post-translational modification Phosphoserine. The 43-residue stretch at 297–339 (DIDPDVLDSMHSLGCFRDRNKLLQDLLSEEENQEKMIYFLLLD) folds into the UBA domain. Residues 345–366 (PSQEDEDLPPRNEIDPPRKRVD) are compositionally biased toward basic and acidic residues. Disordered stretches follow at residues 345–475 (PSQE…GVPW) and 493–513 (HRRKLQVPTPEEMSNLTPESS). A phosphoserine mark is found at Ser367, Ser382, Ser393, Ser412, Ala416, Ser423, and Ser427. Residues 410 to 428 (SRSISGASSGLSTSPLSSP) are compositionally biased toward low complexity. Positions 431 to 445 (TPHPSPRGSPLPTPK) are enriched in pro residues. Ser455 is modified (phosphoserine). Phosphothreonine is present on residues Thr459, Thr463, and Thr509. Phosphoserine occurs at positions 512, 513, and 520. The KEN box motif lies at 603 to 605 (KEN). Positions 681-736 (KNGQAAQAPSTPAKRSAHGPLGDSAAAGPGPGGDAEYPTGKDTAKMGPPTARREQP) are disordered. Low complexity predominate over residues 699 to 708 (GPLGDSAAAG).

It belongs to the protein kinase superfamily. CAMK Ser/Thr protein kinase family. SNF1 subfamily. In terms of assembly, interacts with FZR1, a regulatory subunit of the APC ubiquitin ligase complex. Interacts with COPS5. Interacts with PAK1. It depends on Mg(2+) as a cofactor. Phosphorylated at Thr-174 by STK11/LKB1 in complex with STE20-related adapter-alpha (STRADA) pseudo kinase and CAB39. Not phosphorylated at Thr-174 by CaMKK2. In contrast, it is phosphorylated and activated by CaMKK1. May be inactivated via dephosphorylation of Thr-174 by PP2C. Phosphorylated at Thr-260 by PKA. Phosphorylation at Thr-260 by PKA was not observed in another study, but this may reflect differences in the experimental approach. Phosphorylation at Thr-260 seems to play a role in the regulation of insulin secretion. In terms of processing, polyubiquitinated by the APC complex in conjunction with FZR1, leading to its proteasomal degradation. Targeted for proteasomal degradation by interaction with COPS5. BRSK2 levels change during the cell cycle. BRSK2 levels are low at the G1/S boundary and gradually increase as cells progress into G2 phase. BRSK2 levels decrease rapidly at the end of mitosis. In terms of tissue distribution, detected in pancreas islets (at protein level).

The protein localises to the cytoplasm. The protein resides in the cytoskeleton. It localises to the microtubule organizing center. It is found in the centrosome. Its subcellular location is the perinuclear region. The protein localises to the endoplasmic reticulum. It catalyses the reaction L-seryl-[protein] + ATP = O-phospho-L-seryl-[protein] + ADP + H(+). The enzyme catalyses L-threonyl-[protein] + ATP = O-phospho-L-threonyl-[protein] + ADP + H(+). The catalysed reaction is L-seryl-[tau protein] + ATP = O-phospho-L-seryl-[tau protein] + ADP + H(+). It carries out the reaction L-threonyl-[tau protein] + ATP = O-phospho-L-threonyl-[tau protein] + ADP + H(+). Activated by phosphorylation on Thr-174 by STK11/LKB1. In terms of biological role, serine/threonine-protein kinase that plays a key role in polarization of neurons and axonogenesis, cell cycle progress and insulin secretion. Phosphorylates CDK16, CDC25C, MAPT/TAU, PAK1 and WEE1. Following phosphorylation and activation by STK11/LKB1, acts as a key regulator of polarization of cortical neurons, probably by mediating phosphorylation of microtubule-associated proteins such as MAPT/TAU at 'Thr-529' and 'Ser-579'. Also regulates neuron polarization by mediating phosphorylation of WEE1 at 'Ser-642' in postmitotic neurons, leading to down-regulate WEE1 activity in polarized neurons. Plays a role in the regulation of the mitotic cell cycle progress and the onset of mitosis. Plays a role in the regulation of insulin secretion in response to elevated glucose levels, probably via phosphorylation of CDK16 and PAK1. While BRSK2 phosphorylated at Thr-174 can inhibit insulin secretion, BRSK2 phosphorylated at Thr-260 can promote insulin secretion. Regulates reorganization of the actin cytoskeleton. May play a role in the apoptotic response triggered by endoplasmic reticulum (ER) stress. The chain is Serine/threonine-protein kinase BRSK2 (BRSK2) from Homo sapiens (Human).